The following is a 35-amino-acid chain: Photosystem II reaction center protein M (35 aa).

Residues 5 to 25 (IFGLTATALFIIIPTSFLLIL) form a helical membrane-spanning segment.

This sequence belongs to the PsbM family. In terms of assembly, PSII is composed of 1 copy each of membrane proteins PsbA, PsbB, PsbC, PsbD, PsbE, PsbF, PsbH, PsbI, PsbJ, PsbK, PsbL, PsbM, PsbT, PsbX, PsbY, PsbZ, Psb30/Ycf12, at least 3 peripheral proteins of the oxygen-evolving complex and a large number of cofactors. It forms dimeric complexes.

The protein localises to the plastid. The protein resides in the chloroplast thylakoid membrane. One of the components of the core complex of photosystem II (PSII). PSII is a light-driven water:plastoquinone oxidoreductase that uses light energy to abstract electrons from H(2)O, generating O(2) and a proton gradient subsequently used for ATP formation. It consists of a core antenna complex that captures photons, and an electron transfer chain that converts photonic excitation into a charge separation. This subunit is found at the monomer-monomer interface. This chain is Photosystem II reaction center protein M, found in Tetradesmus obliquus (Green alga).